A 510-amino-acid chain; its full sequence is NAD(P)H-quinone oxidoreductase subunit 2 B, chloroplastic (510 aa).

13 helical membrane passes run 24 to 44, 57 to 77, 99 to 119, 124 to 144, 149 to 169, 183 to 203, 227 to 247, 295 to 315, 323 to 343, 354 to 374, 395 to 415, 418 to 438, and 484 to 504; these read LLLF…GLIL, IPWL…ALLF, IFQF…VEYI, MAIA…MFLC, LITI…LSGY, YLLM…WLYG, PGIS…LSPA, WHLL…LIAI, MLAY…IVGN, YMLF…LFGL, ALSL…AGFF, LHLF…IGLL, and MIVC…IIAI.

Belongs to the complex I subunit 2 family. NDH is composed of at least 16 different subunits, 5 of which are encoded in the nucleus.

Its subcellular location is the plastid. The protein resides in the chloroplast thylakoid membrane. The catalysed reaction is a plastoquinone + NADH + (n+1) H(+)(in) = a plastoquinol + NAD(+) + n H(+)(out). It carries out the reaction a plastoquinone + NADPH + (n+1) H(+)(in) = a plastoquinol + NADP(+) + n H(+)(out). NDH shuttles electrons from NAD(P)H:plastoquinone, via FMN and iron-sulfur (Fe-S) centers, to quinones in the photosynthetic chain and possibly in a chloroplast respiratory chain. The immediate electron acceptor for the enzyme in this species is believed to be plastoquinone. Couples the redox reaction to proton translocation, and thus conserves the redox energy in a proton gradient. In Gossypium barbadense (Sea Island cotton), this protein is NAD(P)H-quinone oxidoreductase subunit 2 B, chloroplastic.